We begin with the raw amino-acid sequence, 374 residues long: Putative glutamate--cysteine ligase 2 (374 aa).

It belongs to the glutamate--cysteine ligase type 2 family. YbdK subfamily.

It catalyses the reaction L-cysteine + L-glutamate + ATP = gamma-L-glutamyl-L-cysteine + ADP + phosphate + H(+). ATP-dependent carboxylate-amine ligase which exhibits weak glutamate--cysteine ligase activity. The chain is Putative glutamate--cysteine ligase 2 from Verminephrobacter eiseniae (strain EF01-2).